Reading from the N-terminus, the 813-residue chain is G-type lectin S-receptor-like serine/threonine-protein kinase LECRK1 (813 aa).

The N-terminal stretch at 1–19 (MVALLLFPMLLQLLSPTCA) is a signal peptide. Topologically, residues 20-466 (QTQKNITLGS…NRKHWVLGSS (447 aa)) are extracellular. One can recognise a Bulb-type lectin domain in the interval 22–149 (QKNITLGSTL…DGTTKWQTFD (128 aa)). N-linked (GlcNAc...) asparagine glycans are attached at residues Asn24, Asn57, Asn164, Asn168, Asn219, and Asn242. The EGF-like; atypical domain occupies 293 to 346 (PQNICHAIVSDVGSGVCGFNSYCTFDGTRNQIASCQCPPWYKFFDEQKKYKGCK). 5 disulfide bridges follow: Cys297-Cys315, Cys309-Cys327, Cys329-Cys345, Cys391-Cys413, and Cys395-Cys401. A PAN domain is found at 354 to 433 (CDLDEATALA…NMADYVQRTV (80 aa)). Asn407 and Asn441 each carry an N-linked (GlcNAc...) asparagine glycan. Residues 467–487 (LILGTSILVNFALISIFLFGT) traverse the membrane as a helical segment. Residues 488–813 (YCRIATKKNI…DPCSFISSLP (326 aa)) lie on the Cytoplasmic side of the membrane. The Protein kinase domain occupies 523-797 (AGFHEILGAG…KVTQMLDGAV (275 aa)). Residues 529–537 (LGAGASGVV) and Lys553 contribute to the ATP site. Asp647 functions as the Proton acceptor in the catalytic mechanism.

Belongs to the protein kinase superfamily. Ser/Thr protein kinase family.

It is found in the membrane. The enzyme catalyses L-seryl-[protein] + ATP = O-phospho-L-seryl-[protein] + ADP + H(+). It catalyses the reaction L-threonyl-[protein] + ATP = O-phospho-L-threonyl-[protein] + ADP + H(+). In terms of biological role, involved in innate immunity. Required for the expression of defense-related genes PR1A, LOX2 and CHS1 upon biotic stresses. Required for basal resistance to the fungal blast (M.grisea), bacterial blight (X.oryzae pv. oryzae, Xoo) and the herbivorous insect brown planthopper (N.lugens, BPH). May be involved in several defense signaling pathways. Involved in the promotion of seed germination. Required for the expression of alpha-amylase genes during seed germination. Involved in resistance against the herbivorous insect brown planthopper (N.lugens, BPH). Member of the BPH3 (BPH resistance locus 3) cluster which contains LECRK1, LECRK2 and LECRK3. The polypeptide is G-type lectin S-receptor-like serine/threonine-protein kinase LECRK1 (Oryza sativa subsp. japonica (Rice)).